The primary structure comprises 248 residues: Triosephosphate isomerase (248 aa).

Substrate is bound at residue 14-16 (NWK). The active-site Electrophile is H99. The active-site Proton acceptor is E170. Residues G176, S212, and 233–234 (GG) each bind substrate.

This sequence belongs to the triosephosphate isomerase family. Homodimer.

The protein resides in the cytoplasm. It catalyses the reaction D-glyceraldehyde 3-phosphate = dihydroxyacetone phosphate. Its pathway is carbohydrate biosynthesis; gluconeogenesis. It participates in carbohydrate degradation; glycolysis; D-glyceraldehyde 3-phosphate from glycerone phosphate: step 1/1. In terms of biological role, involved in the gluconeogenesis. Catalyzes stereospecifically the conversion of dihydroxyacetone phosphate (DHAP) to D-glyceraldehyde-3-phosphate (G3P). The sequence is that of Triosephosphate isomerase from Bordetella bronchiseptica (strain ATCC BAA-588 / NCTC 13252 / RB50) (Alcaligenes bronchisepticus).